The chain runs to 156 residues: H/ACA ribonucleoprotein complex subunit 2-like protein (156 aa).

This sequence belongs to the eukaryotic ribosomal protein eL8 family. Component of the small nucleolar ribonucleoprotein particle containing H/ACA-type snoRNAs (H/ACA snoRNPs).

Its subcellular location is the nucleus. The protein localises to the nucleolus. Required for ribosome biogenesis. Part of a complex which catalyzes pseudouridylation of rRNA. This involves the isomerization of uridine such that the ribose is subsequently attached to C5, instead of the normal N1. Pseudouridine ('psi') residues may serve to stabilize the conformation of rRNAs. This Arabidopsis thaliana (Mouse-ear cress) protein is H/ACA ribonucleoprotein complex subunit 2-like protein.